Here is a 279-residue protein sequence, read N- to C-terminus: Shikimate dehydrogenase (NADP(+)) (279 aa).

Shikimate is bound by residues 16 to 18 (SRS) and threonine 63. Residue lysine 67 is the Proton acceptor of the active site. Shikimate contacts are provided by asparagine 88 and aspartate 103. NADP(+) contacts are provided by residues 128–132 (GAGGA) and methionine 219. Residue tyrosine 221 participates in shikimate binding. Glycine 243 provides a ligand contact to NADP(+).

It belongs to the shikimate dehydrogenase family. Homodimer.

It catalyses the reaction shikimate + NADP(+) = 3-dehydroshikimate + NADPH + H(+). The protein operates within metabolic intermediate biosynthesis; chorismate biosynthesis; chorismate from D-erythrose 4-phosphate and phosphoenolpyruvate: step 4/7. Involved in the biosynthesis of the chorismate, which leads to the biosynthesis of aromatic amino acids. Catalyzes the reversible NADPH linked reduction of 3-dehydroshikimate (DHSA) to yield shikimate (SA). The chain is Shikimate dehydrogenase (NADP(+)) from Aromatoleum aromaticum (strain DSM 19018 / LMG 30748 / EbN1) (Azoarcus sp. (strain EbN1)).